The sequence spans 393 residues: MAEIVLDHVNKSYPDGHTAVRDLNLTIADGEFLILVGPSGCGKTTTLNMIAGLEDISSGELRIAGERVNEKAPKDRDIAMVFQSYALYPHMTVRQNIAFPLTLAKMRKADIAQKVSETAKILDLTNLLDRKPSQLSGGQRQRVAMGRAIVRHPKAFLMDEPLSNLDAKLRVQMRGEIAQLQRRLGTTTVYVTHDQTEAMTLGDRVVVMYGGIAQQIGTPEELYERPANLFVAGFIGSPAMNFFPARLTAIGLTLPFGEVTLAPEVQGVIAAHPKPENVIVGVRPEHIQDAALIDAYQRIRALTFQVKVNLVESLGADKYLYFTTESPAVHSVQLDELAEVEGESALHENQFVARVPAESKVAIGQSVELAFDTARLAVFDADSGANLTIPHRA.

The ABC transporter domain maps to 4 to 235 (IVLDHVNKSY…PANLFVAGFI (232 aa)). ATP is bound at residue 37-44 (GPSGCGKT). The short motif at 135 to 139 (LSGGQ) is the Helical C-loop; LSGGQ motif element.

This sequence belongs to the ABC transporter superfamily. Monomer. Homodimerizes in the presence of ATP. The complex is composed of two ATP-binding proteins (SugC), two transmembrane proteins (SugA and SugB) and a solute-binding protein (LpqY).

Its subcellular location is the cell inner membrane. It carries out the reaction alpha,alpha-trehalose(out) + ATP + H2O = alpha,alpha-trehalose(in) + ADP + phosphate + H(+). Part of the ABC transporter complex LpqY-SugA-SugB-SugC, which is highly specific for uptake of trehalose. Involved in the recycling of extracellular trehalose released from trehalose-containing molecules synthesized by M.tuberculosis. Trehalose uptake is essential for virulence. Responsible for energy coupling to the transport system. This is Trehalose import ATP-binding protein SugC (sugC) from Mycobacterium tuberculosis (strain CDC 1551 / Oshkosh).